The chain runs to 235 residues: MDMESQKILFALSTPMEIRNECCLPSHSSPKMYLGTCFFDLSSSWGIDDRDDLLRTIHRMIDNGHAARLAGFYHRWFRYSPCEWRDYLAELNEQGQAYAQFVASTAECCGEGGIKAWDYVRMGFLSRMGVLNNWLSEEESLWIQSRIHLRALRYYSNWRQYFAGYTFGRQYWQSPEDDHLPLLREFLARKEYDDSGNDMFYQLFASDDAYYPTLSWQPLAYYSACPETLKDMSDL.

This sequence to E.coli YbeU.

This is an uncharacterized protein from Escherichia coli (strain K12).